Reading from the N-terminus, the 616-residue chain is Dihydroxy-acid dehydratase (616 aa).

D81 lines the Mg(2+) pocket. Residue C122 coordinates [2Fe-2S] cluster. Mg(2+) is bound by residues D123 and K124. N6-carboxylysine is present on K124. Residue C195 participates in [2Fe-2S] cluster binding. E491 lines the Mg(2+) pocket. The active-site Proton acceptor is S517.

Belongs to the IlvD/Edd family. As to quaternary structure, homodimer. [2Fe-2S] cluster serves as cofactor. Requires Mg(2+) as cofactor.

The enzyme catalyses (2R)-2,3-dihydroxy-3-methylbutanoate = 3-methyl-2-oxobutanoate + H2O. It carries out the reaction (2R,3R)-2,3-dihydroxy-3-methylpentanoate = (S)-3-methyl-2-oxopentanoate + H2O. It participates in amino-acid biosynthesis; L-isoleucine biosynthesis; L-isoleucine from 2-oxobutanoate: step 3/4. It functions in the pathway amino-acid biosynthesis; L-valine biosynthesis; L-valine from pyruvate: step 3/4. Functionally, functions in the biosynthesis of branched-chain amino acids. Catalyzes the dehydration of (2R,3R)-2,3-dihydroxy-3-methylpentanoate (2,3-dihydroxy-3-methylvalerate) into 2-oxo-3-methylpentanoate (2-oxo-3-methylvalerate) and of (2R)-2,3-dihydroxy-3-methylbutanoate (2,3-dihydroxyisovalerate) into 2-oxo-3-methylbutanoate (2-oxoisovalerate), the penultimate precursor to L-isoleucine and L-valine, respectively. The polypeptide is Dihydroxy-acid dehydratase (Blochmanniella pennsylvanica (strain BPEN)).